Here is a 363-residue protein sequence, read N- to C-terminus: MSHHDPKEALITPGAALSQLNERSRDIFRQIVENYLATGEPVGSRNISRMISVPLSPASVRNVMADLEQLGLIYAPHTSAGRLPTELGLRFFVDALMQVGDLTEDERQSIQAQLAAIGKQQSIEATLSDAMMRLSGLTRAAAVVLTGKSNPRLKHIEFVRLEPEQALVVLVSEDGQIENRVLALPPGVPSSALIEASNFLNSRIRGRTLSEVRGELEAALAQRRSELDQLTQKIIAAGVASWSGGSSDERRLIVRGHANLLEDLHAMEDLERVRLLFDDLETKKGVADLLGLAEQGEGVRIFIGSENKLFSLSGSSTITAPYRDSSGRIVGVLGVIGPTRLNYARVIPMVDYAARIVSQMLGK.

Belongs to the HrcA family.

Negative regulator of class I heat shock genes (grpE-dnaK-dnaJ and groELS operons). Prevents heat-shock induction of these operons. The protein is Heat-inducible transcription repressor HrcA of Afipia carboxidovorans (strain ATCC 49405 / DSM 1227 / KCTC 32145 / OM5) (Oligotropha carboxidovorans).